A 306-amino-acid polypeptide reads, in one-letter code: uncharacterized protein (306 aa).

Topologically, residues 1 to 6 (MRFRQL) are cytoplasmic. The chain crosses the membrane as a helical span at residues 7–27 (LPLFGALFALYIIWGSTYFVI). Positions 18–141 (IIWGSTYFVI…GLAGIIMLNS (124 aa)) constitute an EamA 1 domain. Over 28-36 (RIGVESWPP) the chain is Periplasmic. The chain crosses the membrane as a helical span at residues 37–57 (LMMAGVRFLAAGILLLAFLLL). Topologically, residues 58 to 67 (RGHKLPPLRP) are cytoplasmic. Residues 68–88 (LLNAALIGLLLLAVGNGMVTV) traverse the membrane as a helical segment. The Periplasmic portion of the chain corresponds to 89–93 (AEHQN). Residues 94–114 (VPSGIAAVVVATVPLFTLCFS) form a helical membrane-spanning segment. The Cytoplasmic portion of the chain corresponds to 115 to 125 (RLFGIKTRKLE). A helical membrane pass occupies residues 126-146 (WVGIAIGLAGIIMLNSGGNLS). Topologically, residues 147 to 148 (GN) are periplasmic. The chain crosses the membrane as a helical span at residues 149 to 169 (PWGAILILIGSISWAFGSVYG). In terms of domain architecture, EamA 2 spans 160–285 (ISWAFGSVYG…IVFAVVLVTL (126 aa)). The Cytoplasmic segment spans residues 170-173 (SRIT). Residues 174 to 194 (LPVGMMAGAIEMLAAGVVLMI) form a helical membrane-spanning segment. The Periplasmic segment spans residues 195–206 (ASMIAGEKLTAL). Residues 207–227 (PSLSGFLAVGYLALFGSIIAI) traverse the membrane as a helical segment. Over 228–239 (NAYMYLIRNVSP) the chain is Cytoplasmic. The helical transmembrane segment at 240–260 (ALATSYAYVNPVVAVLLGTGL) threads the bilayer. The Periplasmic segment spans residues 261–269 (GGETLSKIE). A helical transmembrane segment spans residues 270–290 (WLALGVIVFAVVLVTLGKYLF). At 291 to 306 (PAKPVVAPVIQDASSE) the chain is on the cytoplasmic side.

It belongs to the EamA transporter family.

The protein resides in the cell inner membrane. This is an uncharacterized protein from Escherichia coli O157:H7.